Consider the following 322-residue polypeptide: ATP-dependent 6-phosphofructokinase 1 (322 aa).

Gly-11 serves as a coordination point for ATP. An ADP-binding site is contributed by 21-25 (RAVVR). Residues 72–73 (RS) and 102–105 (GDGT) contribute to the ATP site. Residue Asp-103 participates in Mg(2+) binding. Position 126–128 (126–128 (TID)) interacts with substrate. The active-site Proton acceptor is Asp-128. Arg-155 is an ADP binding site. Substrate is bound by residues Arg-163 and 170–172 (MGR). ADP is bound by residues 186-188 (GAE), Arg-212, and 214-216 (KKS). Residues Glu-223, Arg-246, and 252–255 (HIQR) contribute to the substrate site.

Belongs to the phosphofructokinase type A (PFKA) family. ATP-dependent PFK group I subfamily. Prokaryotic clade 'B1' sub-subfamily. As to quaternary structure, homotetramer. Mg(2+) is required as a cofactor.

The protein resides in the cytoplasm. The enzyme catalyses beta-D-fructose 6-phosphate + ATP = beta-D-fructose 1,6-bisphosphate + ADP + H(+). Its pathway is carbohydrate degradation; glycolysis; D-glyceraldehyde 3-phosphate and glycerone phosphate from D-glucose: step 3/4. With respect to regulation, allosterically activated by ADP and other diphosphonucleosides. Allosterically inhibited by phosphoenolpyruvate which induces the dissociation of the active tetramer into an inactive two-subunit forms. In terms of biological role, catalyzes the phosphorylation of D-fructose 6-phosphate to fructose 1,6-bisphosphate by ATP, the first committing step of glycolysis. This Thermus thermophilus (strain ATCC 27634 / DSM 579 / HB8) protein is ATP-dependent 6-phosphofructokinase 1.